The following is a 192-amino-acid chain: MPSLLLASSSSYRRELLARLRLPFTCRSPDIDESRRPDEAAFDLVQRLAREKAEALTAEHHHHLIIGSDQVAVLDEQVLGKPHSFERALEQLTAASGKSVTFLTGLALFNSSTGECQVDCVPFTVHMRELDRASIERYLHAEQPYDCAGSFKAEGLGVSLFRSTEGSDATSLIGLPLIRLVDMLIKEGVSVP.

The active-site Proton acceptor is Asp69.

It belongs to the Maf family. YceF subfamily. A divalent metal cation is required as a cofactor.

It is found in the cytoplasm. The catalysed reaction is N(7)-methyl-GTP + H2O = N(7)-methyl-GMP + diphosphate + H(+). In terms of biological role, nucleoside triphosphate pyrophosphatase that hydrolyzes 7-methyl-GTP (m(7)GTP). May have a dual role in cell division arrest and in preventing the incorporation of modified nucleotides into cellular nucleic acids. This is 7-methyl-GTP pyrophosphatase from Pseudomonas syringae pv. syringae (strain B728a).